A 396-amino-acid chain; its full sequence is NADH-quinone oxidoreductase subunit D (396 aa).

It belongs to the complex I 49 kDa subunit family. As to quaternary structure, NDH-1 is composed of 14 different subunits. Subunits NuoB, C, D, E, F, and G constitute the peripheral sector of the complex.

The protein resides in the cell inner membrane. The catalysed reaction is a quinone + NADH + 5 H(+)(in) = a quinol + NAD(+) + 4 H(+)(out). In terms of biological role, NDH-1 shuttles electrons from NADH, via FMN and iron-sulfur (Fe-S) centers, to quinones in the respiratory chain. The immediate electron acceptor for the enzyme in this species is believed to be ubiquinone. Couples the redox reaction to proton translocation (for every two electrons transferred, four hydrogen ions are translocated across the cytoplasmic membrane), and thus conserves the redox energy in a proton gradient. The polypeptide is NADH-quinone oxidoreductase subunit D (Bartonella henselae (strain ATCC 49882 / DSM 28221 / CCUG 30454 / Houston 1) (Rochalimaea henselae)).